We begin with the raw amino-acid sequence, 447 residues long: Rab GDP dissociation inhibitor alpha (447 aa).

At serine 427 the chain carries Phosphoserine.

It belongs to the Rab GDI family. Interacts with RHOH. Interacts with the non-phosphorylated forms of RAB1A, RAB3A, RAB5A, RAB5B, RAB5C, RAB8A, RAB8B, RAB12, RAB35, and RAB43. Interacts with RAB10. In terms of tissue distribution, high expression in brain, lower in other tissues.

It is found in the cytoplasm. The protein localises to the golgi apparatus. Its subcellular location is the trans-Golgi network. Regulates the GDP/GTP exchange reaction of most Rab proteins by inhibiting the dissociation of GDP from them, and the subsequent binding of GTP to them. Promotes the dissociation of GDP-bound Rab proteins from the membrane and inhibits their activation. Promotes the dissociation of RAB1A, RAB3A, RAB5A and RAB10 from membranes. This Mus musculus (Mouse) protein is Rab GDP dissociation inhibitor alpha (Gdi1).